A 202-amino-acid chain; its full sequence is Transcriptional regulator GfcR 2 (202 aa).

The protein belongs to the purine/pyrimidine phosphoribosyltransferase family. GfcR subfamily.

This Methanosarcina barkeri (strain Fusaro / DSM 804) protein is Transcriptional regulator GfcR 2.